The chain runs to 210 residues: Large ribosomal subunit protein bL25 (210 aa).

Belongs to the bacterial ribosomal protein bL25 family. CTC subfamily. In terms of assembly, part of the 50S ribosomal subunit; part of the 5S rRNA/L5/L18/L25 subcomplex. Contacts the 5S rRNA. Binds to the 5S rRNA independently of L5 and L18.

Its function is as follows. This is one of the proteins that binds to the 5S RNA in the ribosome where it forms part of the central protuberance. In Herminiimonas arsenicoxydans, this protein is Large ribosomal subunit protein bL25.